The chain runs to 241 residues: Orotidine 5'-phosphate decarboxylase (241 aa).

Residues aspartate 16, lysine 37, aspartate 64–threonine 73, threonine 128, arginine 190, glutamine 199, glycine 219, and arginine 220 contribute to the substrate site. Lysine 66 serves as the catalytic Proton donor.

It belongs to the OMP decarboxylase family. Type 1 subfamily. In terms of assembly, homodimer.

The enzyme catalyses orotidine 5'-phosphate + H(+) = UMP + CO2. It participates in pyrimidine metabolism; UMP biosynthesis via de novo pathway; UMP from orotate: step 2/2. Its function is as follows. Catalyzes the decarboxylation of orotidine 5'-monophosphate (OMP) to uridine 5'-monophosphate (UMP). The polypeptide is Orotidine 5'-phosphate decarboxylase (Prochlorococcus marinus (strain NATL2A)).